The following is a 202-amino-acid chain: MKALTARQQQVYDLIRDHINQTGMPPTRAEIAAQLGFRSPNAAEEHLKALARKGVIEIVSGASRGIRLMMEDESGLPLIGRVAAGEPLLAEQHIEGHYQVDPGLFKPGADFLLRVSGMSMKNIGIMDGDLLAVHKTEDVRNGQVVVARIDDEVTVKRLKKNGNMVELLPENPDFQPIVVDLRQQTLTIEGLAVGVIRNGNWL.

Positions 28–48 (RAEIAAQLGFRSPNAAEEHLK) form a DNA-binding region, H-T-H motif. Catalysis depends on for autocatalytic cleavage activity residues Ser119 and Lys156.

Belongs to the peptidase S24 family. As to quaternary structure, homodimer.

The enzyme catalyses Hydrolysis of Ala-|-Gly bond in repressor LexA.. In terms of biological role, represses a number of genes involved in the response to DNA damage (SOS response), including recA and lexA. Binds to the 16 bp palindromic sequence 5'-CTGTATATATATACAG-3'. In the presence of single-stranded DNA, RecA interacts with LexA causing an autocatalytic cleavage which disrupts the DNA-binding part of LexA, leading to derepression of the SOS regulon and eventually DNA repair. In Erwinia tasmaniensis (strain DSM 17950 / CFBP 7177 / CIP 109463 / NCPPB 4357 / Et1/99), this protein is LexA repressor.